The primary structure comprises 625 residues: Vacuolar-sorting receptor 7 (625 aa).

A signal peptide spans 1–26 (MGLVNGRASLTFLLAALTIIAMVVEA). At 27 to 564 (RFVVEKESIS…CIERYGSKTA (538 aa)) the chain is on the lumenal side. The 109-residue stretch at 58–166 (DYGGFLIGSV…SFGDDLRQGF (109 aa)) folds into the PA domain. Residues N292, N400, and N432 are each glycosylated (N-linked (GlcNAc...) asparagine). EGF-like domains are found at residues 414 to 464 (ETNE…TSCT) and 467 to 513 (GPAR…LTCE). Cystine bridges form between C418–C436, C425–C445, C447–C463, C471–C491, C478–C499, C501–C512, and C542–C555. The 43-residue stretch at 514-556 (DINECKERSVCQCSGCRCKNSWGGYKCSCSGDRLYINDQDTCI) folds into the EGF-like 3; calcium-binding domain. Residues 565 to 585 (WWLTFLILAIVAVAGLAGYIF) traverse the membrane as a helical segment. At 586–625 (YKYRFRSYMDSEIMTIMSQYMPLESQRAREVPSEAEPFTL) the chain is on the cytoplasmic side. A Tyrosine-based internalization motif motif is present at residues 605–608 (YMPL).

It belongs to the VSR (BP-80) family. In terms of tissue distribution, expressed at low levels in seedlings, roots, young leaves, flowers and siliques.

It is found in the golgi apparatus membrane. In terms of biological role, vacuolar-sorting receptor (VSR) involved in clathrin-coated vesicles sorting from Golgi apparatus to vacuoles. The chain is Vacuolar-sorting receptor 7 (VSR7) from Arabidopsis thaliana (Mouse-ear cress).